Reading from the N-terminus, the 205-residue chain is Imidazole glycerol phosphate synthase subunit HisH (205 aa).

The Glutamine amidotransferase type-1 domain maps to 1–205; sequence MITIVDYQMG…RFATAPVEVA (205 aa). Cysteine 79 functions as the Nucleophile in the catalytic mechanism. Active-site residues include histidine 182 and glutamate 184.

As to quaternary structure, heterodimer of HisH and HisF.

The protein localises to the cytoplasm. It carries out the reaction 5-[(5-phospho-1-deoxy-D-ribulos-1-ylimino)methylamino]-1-(5-phospho-beta-D-ribosyl)imidazole-4-carboxamide + L-glutamine = D-erythro-1-(imidazol-4-yl)glycerol 3-phosphate + 5-amino-1-(5-phospho-beta-D-ribosyl)imidazole-4-carboxamide + L-glutamate + H(+). The enzyme catalyses L-glutamine + H2O = L-glutamate + NH4(+). The protein operates within amino-acid biosynthesis; L-histidine biosynthesis; L-histidine from 5-phospho-alpha-D-ribose 1-diphosphate: step 5/9. In terms of biological role, IGPS catalyzes the conversion of PRFAR and glutamine to IGP, AICAR and glutamate. The HisH subunit catalyzes the hydrolysis of glutamine to glutamate and ammonia as part of the synthesis of IGP and AICAR. The resulting ammonia molecule is channeled to the active site of HisF. The protein is Imidazole glycerol phosphate synthase subunit HisH of Rhodopirellula baltica (strain DSM 10527 / NCIMB 13988 / SH1).